We begin with the raw amino-acid sequence, 116 residues long: NADH-ubiquinone oxidoreductase chain 3 (116 aa).

3 consecutive transmembrane segments (helical) span residues L3–F23, F56–L76, and P85–Y105.

It belongs to the complex I subunit 3 family.

It localises to the mitochondrion membrane. The catalysed reaction is a ubiquinone + NADH + 5 H(+)(in) = a ubiquinol + NAD(+) + 4 H(+)(out). In terms of biological role, core subunit of the mitochondrial membrane respiratory chain NADH dehydrogenase (Complex I) that is believed to belong to the minimal assembly required for catalysis. Complex I functions in the transfer of electrons from NADH to the respiratory chain. The immediate electron acceptor for the enzyme is believed to be ubiquinone. The protein is NADH-ubiquinone oxidoreductase chain 3 (MT-ND3) of Salmo salar (Atlantic salmon).